A 553-amino-acid polypeptide reads, in one-letter code: Membrane protein insertase YidC (553 aa).

A helical membrane pass occupies residues 6 to 26 (LIALVLSLLVLVFWEMYFGLF). Positions 34 to 59 (NKTEQAAPTTTQPATPQTVPPQAATP) are disordered. The span at 38-59 (QAAPTTTQPATPQTVPPQAATP) shows a compositional bias: low complexity. Transmembrane regions (helical) follow at residues 331–351 (LASA…VYVL), 360–380 (NWGV…WPLT), 424–444 (VNPM…FALY), 477–497 (IPYL…MFIQ), and 512–532 (IMMI…SGLV).

It belongs to the OXA1/ALB3/YidC family. Type 1 subfamily. As to quaternary structure, interacts with the Sec translocase complex via SecD. Specifically interacts with transmembrane segments of nascent integral membrane proteins during membrane integration.

The protein localises to the cell inner membrane. Its function is as follows. Required for the insertion and/or proper folding and/or complex formation of integral membrane proteins into the membrane. Involved in integration of membrane proteins that insert both dependently and independently of the Sec translocase complex, as well as at least some lipoproteins. Aids folding of multispanning membrane proteins. The sequence is that of Membrane protein insertase YidC from Syntrophobacter fumaroxidans (strain DSM 10017 / MPOB).